The following is a 256-amino-acid chain: Type III pantothenate kinase (256 aa).

Position 6 to 13 (6 to 13 (DAGNSRIK)) interacts with ATP. Residues tyrosine 90 and 97 to 100 (GSDR) contribute to the substrate site. The active-site Proton acceptor is the aspartate 99. Threonine 123 is a binding site for ATP. Residue threonine 187 coordinates substrate.

This sequence belongs to the type III pantothenate kinase family. As to quaternary structure, homodimer. Requires NH4(+) as cofactor. K(+) serves as cofactor.

It localises to the cytoplasm. The enzyme catalyses (R)-pantothenate + ATP = (R)-4'-phosphopantothenate + ADP + H(+). Its pathway is cofactor biosynthesis; coenzyme A biosynthesis; CoA from (R)-pantothenate: step 1/5. In terms of biological role, catalyzes the phosphorylation of pantothenate (Pan), the first step in CoA biosynthesis. The chain is Type III pantothenate kinase from Burkholderia mallei (strain ATCC 23344).